Consider the following 100-residue polypeptide: Small ribosomal subunit protein uS14c (100 aa).

Belongs to the universal ribosomal protein uS14 family. Part of the 30S ribosomal subunit.

Its subcellular location is the plastid. It is found in the chloroplast. Its function is as follows. Binds 16S rRNA, required for the assembly of 30S particles. This is Small ribosomal subunit protein uS14c from Barbarea verna (Land cress).